The sequence spans 134 residues: Small ribosomal subunit protein uS11 (134 aa).

A disordered region spans residues 114-134 (DVTPVPSDSTRRKGGRRGRRL). Over residues 125 to 134 (RKGGRRGRRL) the composition is skewed to basic residues.

Belongs to the universal ribosomal protein uS11 family.

The chain is Small ribosomal subunit protein uS11 (RPS14) from Candida albicans (Yeast).